A 183-amino-acid chain; its full sequence is Mid1-interacting protein 1 (183 aa).

The residue at position 1 (M1) is an N-acetylmethionine. 2 positions are modified to phosphoserine: S75 and S79.

It belongs to the SPOT14 family. As to quaternary structure, homodimer in the absence of THRSP. Heterodimer with THRSP. The homodimer interacts with ACACA and ACACB. Promotes polymerization of Acetyl-CoA carboxylase to form complexes that contain MID1IP1 and ACACA and/or ACACB. Interaction with THRSP interferes with ACACA binding.

The protein localises to the nucleus. Its subcellular location is the cytoplasm. It localises to the cytoskeleton. Functionally, plays a role in the regulation of lipogenesis in liver. Up-regulates ACACA enzyme activity. Required for efficient lipid biosynthesis, including triacylglycerol, diacylglycerol and phospholipid. Involved in stabilization of microtubules. The chain is Mid1-interacting protein 1 (MID1IP1) from Homo sapiens (Human).